The primary structure comprises 35 residues: NPASCCSCADVDPGRASRKTPKGEDQVFIKEKDRC.

The disordered stretch occupies residues Asn1–Cys35. Residues Pro21–Cys35 are compositionally biased toward basic and acidic residues.

In terms of processing, contains disulfide bonds. Expressed by the venom duct.

Its subcellular location is the secreted. This Conus textile (Cloth-of-gold cone) protein is Conotoxin TxMEKL-0422.